A 747-amino-acid chain; its full sequence is Probable alpha-galactosidase C (747 aa).

Residues 1-24 (MVAFMNSATFVAGLFTLWSRPIWA) form the signal peptide. N-linked (GlcNAc...) asparagine glycans are attached at residues Asn36, Asn182, Asn190, Asn362, Asn429, and Asn449. The active-site Nucleophile is Asp507. Asn534 carries N-linked (GlcNAc...) asparagine glycosylation. Asp569 functions as the Proton donor in the catalytic mechanism.

The protein belongs to the glycosyl hydrolase 36 family. Homotetramer. It depends on Mg(2+) as a cofactor. NAD(+) serves as cofactor.

The protein resides in the secreted. The catalysed reaction is Hydrolysis of terminal, non-reducing alpha-D-galactose residues in alpha-D-galactosides, including galactose oligosaccharides, galactomannans and galactolipids.. In terms of biological role, hydrolyzes a variety of simple alpha-D-galactoside as well as more complex molecules such as oligosaccharides and polysaccharides. This is Probable alpha-galactosidase C (aglC) from Aspergillus terreus (strain NIH 2624 / FGSC A1156).